The sequence spans 226 residues: Protein FMP52-1, mitochondrial (226 aa).

A mitochondrion-targeting transit peptide spans 1–43 (MSAFVLGSTGLVGLQILKVLDSSTAFKKVSTVSRRLPSVTSGK).

It belongs to the FMP52 family.

It is found in the mitochondrion outer membrane. The polypeptide is Protein FMP52-1, mitochondrial (FMP521) (Scheffersomyces stipitis (strain ATCC 58785 / CBS 6054 / NBRC 10063 / NRRL Y-11545) (Yeast)).